A 288-amino-acid chain; its full sequence is Elongation factor Ts (288 aa).

The interval 82–85 (TDFV) is involved in Mg(2+) ion dislocation from EF-Tu.

This sequence belongs to the EF-Ts family.

Its subcellular location is the cytoplasm. Functionally, associates with the EF-Tu.GDP complex and induces the exchange of GDP to GTP. It remains bound to the aminoacyl-tRNA.EF-Tu.GTP complex up to the GTP hydrolysis stage on the ribosome. In Chlorobium limicola (strain DSM 245 / NBRC 103803 / 6330), this protein is Elongation factor Ts.